The chain runs to 398 residues: Acetate kinase (398 aa).

N8 contacts Mg(2+). K15 provides a ligand contact to ATP. R90 provides a ligand contact to substrate. Catalysis depends on D147, which acts as the Proton donor/acceptor. ATP contacts are provided by residues 207-211 (HIGAG), 282-284 (DMR), and 330-334 (GVGEN). A Mg(2+)-binding site is contributed by E383.

It belongs to the acetokinase family. In terms of assembly, homodimer. Requires Mg(2+) as cofactor. The cofactor is Mn(2+).

It localises to the cytoplasm. It carries out the reaction acetate + ATP = acetyl phosphate + ADP. It participates in metabolic intermediate biosynthesis; acetyl-CoA biosynthesis; acetyl-CoA from acetate: step 1/2. In terms of biological role, catalyzes the formation of acetyl phosphate from acetate and ATP. Can also catalyze the reverse reaction. This is Acetate kinase from Limosilactobacillus fermentum (strain NBRC 3956 / LMG 18251) (Lactobacillus fermentum).